Reading from the N-terminus, the 359-residue chain is Pyruvate dehydrogenase E1 component subunit beta, mitochondrial (359 aa).

A mitochondrion-targeting transit peptide spans 1–30 (MAAVAGLVRGPLRQASGLLKRRFHRSAPAA). Tyr67 is subject to Phosphotyrosine. Glu89 contributes to the thiamine diphosphate binding site. K(+)-binding residues include Ile142, Ala190, Ile191, Asp193, and Asn195. N6-acetyllysine is present on Lys354.

As to quaternary structure, heterotetramer of two PDHA1 and two PDHB subunits. The heterotetramer interacts with DLAT, and is part of the multimeric pyruvate dehydrogenase complex that contains multiple copies of pyruvate dehydrogenase (E1), dihydrolipoamide acetyltransferase (DLAT, E2) and lipoamide dehydrogenase (DLD, E3). These subunits are bound to an inner core composed of about 48 DLAT and 12 PDHX molecules. Interacts with DLAT. Requires thiamine diphosphate as cofactor.

It localises to the mitochondrion matrix. The enzyme catalyses N(6)-[(R)-lipoyl]-L-lysyl-[protein] + pyruvate + H(+) = N(6)-[(R)-S(8)-acetyldihydrolipoyl]-L-lysyl-[protein] + CO2. In terms of biological role, the pyruvate dehydrogenase complex catalyzes the overall conversion of pyruvate to acetyl-CoA and CO(2), and thereby links the glycolytic pathway to the tricarboxylic cycle. This Rattus norvegicus (Rat) protein is Pyruvate dehydrogenase E1 component subunit beta, mitochondrial (Pdhb).